A 414-amino-acid chain; its full sequence is CCA-adding enzyme (414 aa).

Positions 8 and 11 each coordinate ATP. CTP is bound by residues G8 and R11. Residues D21 and D23 each contribute to the Mg(2+) site. R91, R137, and R140 together coordinate ATP. Positions 91, 137, and 140 each coordinate CTP.

This sequence belongs to the tRNA nucleotidyltransferase/poly(A) polymerase family. Bacterial CCA-adding enzyme type 2 subfamily. The cofactor is Mg(2+).

The catalysed reaction is a tRNA precursor + 2 CTP + ATP = a tRNA with a 3' CCA end + 3 diphosphate. The enzyme catalyses a tRNA with a 3' CCA end + 2 CTP + ATP = a tRNA with a 3' CCACCA end + 3 diphosphate. Functionally, catalyzes the addition and repair of the essential 3'-terminal CCA sequence in tRNAs without using a nucleic acid template. Adds these three nucleotides in the order of C, C, and A to the tRNA nucleotide-73, using CTP and ATP as substrates and producing inorganic pyrophosphate. tRNA 3'-terminal CCA addition is required both for tRNA processing and repair. Also involved in tRNA surveillance by mediating tandem CCA addition to generate a CCACCA at the 3' terminus of unstable tRNAs. While stable tRNAs receive only 3'-terminal CCA, unstable tRNAs are marked with CCACCA and rapidly degraded. This is CCA-adding enzyme from Buchnera aphidicola subsp. Acyrthosiphon pisum (strain Tuc7).